A 177-amino-acid polypeptide reads, in one-letter code: Bifunctional protein PyrR (177 aa).

The PRPP-binding signature appears at 99–111; that stretch reads LVLIDDVIYKGRT.

Belongs to the purine/pyrimidine phosphoribosyltransferase family. PyrR subfamily.

The enzyme catalyses UMP + diphosphate = 5-phospho-alpha-D-ribose 1-diphosphate + uracil. Functionally, regulates the transcription of the pyrimidine nucleotide (pyr) operon in response to exogenous pyrimidines. Its function is as follows. Also displays a weak uracil phosphoribosyltransferase activity which is not physiologically significant. This Picosynechococcus sp. (strain ATCC 27264 / PCC 7002 / PR-6) (Agmenellum quadruplicatum) protein is Bifunctional protein PyrR.